A 617-amino-acid chain; its full sequence is MANSTGLQFTVKVGALPDTTFAVVDFELSEALNQPFALSLNLASSLPGIDFGAVLDQPCELLVWYEGELQRRVSGIVSRFAQGDTGFRRTRYQAEVRPALWRLGLRTNARIFQTQKPDAIIGTLLEEAGITDFAFALRHEHAVREYCVQYRESDLAFINRLAAEEGLFYFHEFEAGKHRVVFADDAGALTKGPELFFNLATQGLSEGAYVRRFRYAEAVSTAEVALKDYSFKTPAYGLLHNKMSSELDHQRETYQHFDYPGRFKQDPSGKAFTGYRLDALRAGAMTGEGESNAAELMPGSSFTLTEHPNPAFNLAWQVVAVTHSGQQPQALEEESGGEPTTLSNSFEVVKGTTTWRAAMPYKPMVDGPQIATVVGPAGEEIYCDEFGRIKLQFPWDRYGASDDQSSCWVRVSQGWAGGQYGLIAIPRIGHEVVVSFLEGDPDQPIVTGRTFHATNPSPYPLPASKTRTSLRTSTHKGAGFNELRFEDQAGQEEVFIHAQKDMNTVVLNNRSTSVNASHTENVGGDQTVVVQHNQTVSVKENQVTEIQGEQTVAVTQNRNTTVNDNESLQVKNNIAIQSQSGDILIATAGGFIAIDKDGNISITGKGLVLNGTRIDLN.

Disordered regions lie at residues 325-344 (GQQP…TLSN) and 449-469 (RTFH…TRTS).

Belongs to the VgrG protein family.

Functionally, a Vgr protein that is probably part of a type VI secretion system (T6SS). May be required for export of proteins involved in Rhs-mediated cellular contact-dependent growth inhibition (CDI). This Dickeya dadantii (strain 3937) (Erwinia chrysanthemi (strain 3937)) protein is Putative type VI secretion system protein VgrGA (vgrGA).